The chain runs to 146 residues: Snaclec alboaggregin-B subunit beta (146 aa).

The N-terminal stretch at 1 to 23 is a signal peptide; sequence MGRFIFGSFGLLVLFLSLSGTGA. A C-type lectin domain is found at 24–143; sequence DCPSDWSSYD…CSRTYPFVCK (120 aa). 3 disulfide bridges follow: C25–C36, C53–C142, and C119–C134.

The protein belongs to the snaclec family. Heterodimer of subunits alpha and beta; disulfide-linked. In terms of tissue distribution, expressed by the venom gland.

The protein localises to the secreted. Its function is as follows. Weakly agglutinates platelets at high doses by binding to GPIbalpha (GP1BA). The sequence is that of Snaclec alboaggregin-B subunit beta from Trimeresurus albolabris (White-lipped pit viper).